Reading from the N-terminus, the 349-residue chain is Protein RecA (349 aa).

Position 69–76 (69–76 (GPESSGKT)) interacts with ATP.

This sequence belongs to the RecA family.

It is found in the cytoplasm. Can catalyze the hydrolysis of ATP in the presence of single-stranded DNA, the ATP-dependent uptake of single-stranded DNA by duplex DNA, and the ATP-dependent hybridization of homologous single-stranded DNAs. It interacts with LexA causing its activation and leading to its autocatalytic cleavage. This chain is Protein RecA, found in Rippkaea orientalis (strain PCC 8801 / RF-1) (Cyanothece sp. (strain PCC 8801)).